A 548-amino-acid polypeptide reads, in one-letter code: Glucose-6-phosphate isomerase 1 (548 aa).

The active-site Proton donor is glutamate 353. Residues histidine 384 and lysine 512 contribute to the active site.

The protein belongs to the GPI family.

The protein localises to the cytoplasm. It catalyses the reaction alpha-D-glucose 6-phosphate = beta-D-fructose 6-phosphate. It functions in the pathway carbohydrate biosynthesis; gluconeogenesis. It participates in carbohydrate degradation; glycolysis; D-glyceraldehyde 3-phosphate and glycerone phosphate from D-glucose: step 2/4. Catalyzes the reversible isomerization of glucose-6-phosphate to fructose-6-phosphate. This Neisseria meningitidis serogroup A / serotype 4A (strain DSM 15465 / Z2491) protein is Glucose-6-phosphate isomerase 1.